A 360-amino-acid chain; its full sequence is Photosystem II protein D1 (360 aa).

A run of 3 helical transmembrane segments spans residues 29–46 (YIGW…SAIA), 118–133 (HFLI…EWEL), and 142–156 (WICV…AATA). Residue His118 coordinates chlorophyll a. Position 126 (Tyr126) interacts with pheophytin a. [CaMn4O5] cluster-binding residues include Asp170 and Glu189. Residues 197–218 (FHMLGVAGVFGGSLFSAMHGSL) form a helical membrane-spanning segment. His198 contacts chlorophyll a. Residues His215 and 264 to 265 (SF) each bind a quinone. Residue His215 participates in Fe cation binding. His272 serves as a coordination point for Fe cation. Residues 274-288 (FLAAWPVIGIWFTAL) form a helical membrane-spanning segment. Residues His332, Glu333, Asp342, and Ala344 each coordinate [CaMn4O5] cluster. Residues 345–360 (AGDVAPVALTAPPING) constitute a propeptide that is removed on maturation.

The protein belongs to the reaction center PufL/M/PsbA/D family. In terms of assembly, PSII is composed of 1 copy each of membrane proteins PsbA, PsbB, PsbC, PsbD, PsbE, PsbF, PsbH, PsbI, PsbJ, PsbK, PsbL, PsbM, PsbT, PsbX, PsbY, PsbZ, Psb30/Ycf12, peripheral proteins PsbO, CyanoQ (PsbQ), PsbU, PsbV and a large number of cofactors. It forms dimeric complexes. Requires The D1/D2 heterodimer binds P680, chlorophylls that are the primary electron donor of PSII, and subsequent electron acceptors. It shares a non-heme iron and each subunit binds pheophytin, quinone, additional chlorophylls, carotenoids and lipids. D1 provides most of the ligands for the Mn4-Ca-O5 cluster of the oxygen-evolving complex (OEC). There is also a Cl(-1) ion associated with D1 and D2, which is required for oxygen evolution. The PSII complex binds additional chlorophylls, carotenoids and specific lipids. as cofactor. Post-translationally, tyr-161 forms a radical intermediate that is referred to as redox-active TyrZ, YZ or Y-Z. C-terminally processed by CtpA; processing is essential to allow assembly of the oxygen-evolving complex and thus photosynthetic growth.

Its subcellular location is the cellular thylakoid membrane. The enzyme catalyses 2 a plastoquinone + 4 hnu + 2 H2O = 2 a plastoquinol + O2. In terms of biological role, photosystem II (PSII) is a light-driven water:plastoquinone oxidoreductase that uses light energy to abstract electrons from H(2)O, generating O(2) and a proton gradient subsequently used for ATP formation. It consists of a core antenna complex that captures photons, and an electron transfer chain that converts photonic excitation into a charge separation. The D1/D2 (PsbA/PsbD) reaction center heterodimer binds P680, the primary electron donor of PSII as well as several subsequent electron acceptors. The sequence is that of Photosystem II protein D1 from Trichormus azollae (Anabaena azollae).